The primary structure comprises 188 residues: Elongation factor P (188 aa).

N6-(3,6-diaminohexanoyl)-5-hydroxylysine is present on K34.

Belongs to the elongation factor P family. Post-translationally, may be beta-lysylated on the epsilon-amino group of Lys-34 by the combined action of EpmA and EpmB, and then hydroxylated on the C5 position of the same residue by EpmC (if this protein is present). Lysylation is critical for the stimulatory effect of EF-P on peptide-bond formation. The lysylation moiety may extend toward the peptidyltransferase center and stabilize the terminal 3-CCA end of the tRNA. Hydroxylation of the C5 position on Lys-34 may allow additional potential stabilizing hydrogen-bond interactions with the P-tRNA.

The protein resides in the cytoplasm. It functions in the pathway protein biosynthesis; polypeptide chain elongation. Involved in peptide bond synthesis. Alleviates ribosome stalling that occurs when 3 or more consecutive Pro residues or the sequence PPG is present in a protein, possibly by augmenting the peptidyl transferase activity of the ribosome. Modification of Lys-34 is required for alleviation. This is Elongation factor P from Aliivibrio fischeri (strain ATCC 700601 / ES114) (Vibrio fischeri).